The chain runs to 418 residues: Creatine kinase U-type, mitochondrial (418 aa).

A mitochondrion-targeting transit peptide spans 1–39 (MAGPFSRLLSARPGLKLLALAGAGSLAAGILLRPESVRA). The tract at residues 40–64 (ATGERRRLYPPSAEYPDLRKHNNCM) is cardiolipin-binding. The 87-residue stretch at 46–132 (RLYPPSAEYP…FDPVIQERHN (87 aa)) folds into the Phosphagen kinase N-terminal domain. Residue Ser152 is modified to Phosphoserine. The region spanning 159 to 401 (YVLSSRVRTG…NYLIDCERRL (243 aa)) is the Phosphagen kinase C-terminal domain. 162–166 (SSRVR) provides a ligand contact to ATP. The residue at position 197 (Ser197) is a Phosphoserine. Thr214 is modified (phosphothreonine). An ATP-binding site is contributed by His225. The residue at position 233 (Ser233) is a Phosphoserine. ATP contacts are provided by residues Arg270, Arg326, 354–359 (RGTGGV), and Asp369. At Thr356 the chain carries Phosphothreonine.

It belongs to the ATP:guanido phosphotransferase family. Exists as an octamer composed of four MTCK homodimers. In terms of tissue distribution, in many tissues, with highest levels in brain gut and kidney. In the kidney localized primarily in the outer medulla in the thick ascending limb and distal convoluted tubule.

The protein resides in the mitochondrion inner membrane. It catalyses the reaction creatine + ATP = N-phosphocreatine + ADP + H(+). Its function is as follows. Reversibly catalyzes the transfer of phosphate between ATP and various phosphogens (e.g. creatine phosphate). Creatine kinase isoenzymes play a central role in energy transduction in tissues with large, fluctuating energy demands, such as skeletal muscle, heart, brain and spermatozoa. The sequence is that of Creatine kinase U-type, mitochondrial (Ckmt1) from Rattus norvegicus (Rat).